The following is a 132-amino-acid chain: Small ribosomal subunit protein eS24 (132 aa).

Positions 91 to 132 are disordered; sequence LATHGLYEKKKTSRKQRTERQNRMKKVRSIKKASVGAAGKKN. Basic and acidic residues predominate over residues 96-112; that stretch reads LYEKKKTSRKQRTERQN.

This sequence belongs to the eukaryotic ribosomal protein eS24 family. As to quaternary structure, component of the small ribosomal subunit.

The protein localises to the cytoplasm. Its function is as follows. Component of the small ribosomal subunit. The ribosome is a large ribonucleoprotein complex responsible for the synthesis of proteins in the cell. Required for processing of pre-rRNA and maturation of 40S ribosomal subunits. The sequence is that of Small ribosomal subunit protein eS24 (rps24) from Oryzias latipes (Japanese rice fish).